Reading from the N-terminus, the 365-residue chain is Potassium channel subfamily K member 9 (365 aa).

Residues M1–T8 lie on the Cytoplasmic side of the membrane. A helical membrane pass occupies residues L9–L29. Residues E30–I88 are Extracellular-facing. Residue N53 is glycosylated (N-linked (GlcNAc...) asparagine). The segment at residues T89–P101 is an intramembrane region (pore-forming). K(+)-binding residues include T93, I94, G95, and Y96. Positions T93–H98 are selectivity filter 1. Over G102 to K107 the chain is Extracellular. The helical transmembrane segment at A108–L128 threads the bilayer. The Cytoplasmic portion of the chain corresponds to G129–N158. Residues M159–S179 traverse the membrane as a helical segment. Topologically, residues Q180–F194 are extracellular. Residues I195–A207 constitute an intramembrane region (pore-forming). Residues T199, I200, G201, and F202 each coordinate K(+). A selectivity filter 2 region spans residues T199–D204. At L208 to P218 the chain is on the extracellular side. A helical transmembrane segment spans residues F219–L239. The Cytoplasmic portion of the chain corresponds to N240–V365. Positions V243 to T248 are X-gate.

The protein belongs to the two pore domain potassium channel (TC 1.A.1.8) family. Homodimer. Heterodimer with KCNK1. Heterodimer with KCNK3. Highly expressed in the brain.

The protein localises to the cell membrane. The protein resides in the mitochondrion inner membrane. Its subcellular location is the cell projection. It is found in the dendrite. The enzyme catalyses K(+)(in) = K(+)(out). It catalyses the reaction Na(+)(in) = Na(+)(out). With respect to regulation, inhibited by extracellular acidification. Its function is as follows. K(+) channel that conducts voltage-dependent outward rectifying currents upon membrane depolarization. Voltage sensing is coupled to K(+) electrochemical gradient in an 'ion flux gating' mode where outward but not inward ion flow opens the gate. Changes ion selectivity and becomes permeable to Na(+) ions in response to extracellular acidification. Protonation of the pH sensor His-98 stabilizes C-type inactivation conformation likely converting the channel from outward K(+)-conducting, to inward Na(+)-conducting to nonconductive state. Homo- and heterodimerizes to form functional channels with distinct regulatory and gating properties. Allows K(+) currents with fast-gating kinetics important for the repolarization and hyperpolarization phases of action potentials. In granule neurons, hyperpolarizes the resting membrane potential to limit intrinsic neuronal excitability, but once the action potential threshold is reached, supports high-frequency action potential firing and increased neuronal excitability. Homomeric and/or heteromeric KCNK3:KCNK9 channels operate in cerebellar granule cells, whereas heteromeric KCNK1:KCNK9 enables currents in hippocampal dentate gyrus granule neurons. Dispensable for central chemosensory respiration i.e. breathing controlled by brainstem CO2/pH, it rather conducts pH-sensitive currents and controls the firing rate of serotonergic raphe neurons involved in potentiation of the respiratory chemoreflex. In retinal ganglion cells, mediates outward rectifying currents that regulate action potentials in response to acidification of the synaptic cleft. Involved in transmission of image-forming and nonimage-forming visual information in the retina. In adrenal gland, contributes to the maintenance of a hyperpolarized resting membrane potential of aldosterone-producing cells at zona glomerulosa and limits aldosterone release as part of a regulatory mechanism that controls arterial blood pressure and electrolyte homeostasis. The sequence is that of Potassium channel subfamily K member 9 (KCNK9) from Cavia porcellus (Guinea pig).